The primary structure comprises 426 residues: Serine--tRNA ligase (426 aa).

L-serine is bound at residue 233–235; that stretch reads TAE. ATP is bound at residue 264–266; it reads RAE. L-serine is bound at residue Glu287. 351-354 is a binding site for ATP; it reads EISS. Ser387 provides a ligand contact to L-serine.

The protein belongs to the class-II aminoacyl-tRNA synthetase family. Type-1 seryl-tRNA synthetase subfamily. As to quaternary structure, homodimer. The tRNA molecule binds across the dimer.

The protein resides in the cytoplasm. It catalyses the reaction tRNA(Ser) + L-serine + ATP = L-seryl-tRNA(Ser) + AMP + diphosphate + H(+). The enzyme catalyses tRNA(Sec) + L-serine + ATP = L-seryl-tRNA(Sec) + AMP + diphosphate + H(+). Its pathway is aminoacyl-tRNA biosynthesis; selenocysteinyl-tRNA(Sec) biosynthesis; L-seryl-tRNA(Sec) from L-serine and tRNA(Sec): step 1/1. In terms of biological role, catalyzes the attachment of serine to tRNA(Ser). Is also able to aminoacylate tRNA(Sec) with serine, to form the misacylated tRNA L-seryl-tRNA(Sec), which will be further converted into selenocysteinyl-tRNA(Sec). The chain is Serine--tRNA ligase from Clostridium kluyveri (strain NBRC 12016).